A 146-amino-acid chain; its full sequence is Snaclec stejaggregin-B subunit beta-2 (146 aa).

Positions 1–23 (MGRFIFVSFGLLVVFLSLSGSGA) are cleaved as a signal peptide. Positions 32 to 143 (YDLYCYRVFQ…CSQTYPFVCK (112 aa)) constitute a C-type lectin domain. 2 cysteine pairs are disulfide-bonded: cysteine 53–cysteine 142 and cysteine 119–cysteine 134.

It belongs to the snaclec family. In terms of assembly, heteromultimer; disulfide-linked. In terms of tissue distribution, expressed by the venom gland.

The protein resides in the secreted. Its function is as follows. Interferes with one step of hemostasis (modulation of platelet aggregation, or coagulation cascade, for example). This Trimeresurus stejnegeri (Chinese green tree viper) protein is Snaclec stejaggregin-B subunit beta-2.